A 66-amino-acid chain; its full sequence is Ocellatin-PT1 (66 aa).

A signal peptide spans 1 to 22 (MAFLKKSLFLVLFLGLVSLSIC). The propeptide occupies 23-39 (DEEKRQDEDDDDDDDEE). Residue Val66 is modified to Valine amide.

Expressed by the skin glands.

The protein localises to the secreted. Has antibacterial activity against Gram-negative bacterium E.coli ATCC 25922 (MIC=300 uM) but not against S.pneumoniae ATCC 700603, S.choleraesuis ATCC 14028 or Gram-positive bacterium S.aureus ATCC 29313. Shows virtually no hemolytic activity and no cytotoxicity. The polypeptide is Ocellatin-PT1 (Leptodactylus pustulatus (Ceara white-lipped frog)).